The chain runs to 63 residues: Large ribosomal subunit protein bL35 (63 aa).

It belongs to the bacterial ribosomal protein bL35 family.

This is Large ribosomal subunit protein bL35 from Sulfurimonas denitrificans (strain ATCC 33889 / DSM 1251) (Thiomicrospira denitrificans (strain ATCC 33889 / DSM 1251)).